Here is a 1295-residue protein sequence, read N- to C-terminus: Phosphoribosylformylglycinamidine synthase (1295 aa).

The interval alanine 302 to proline 327 is disordered. ATP-binding positions include glycine 306–aspartate 317 and alanine 677. Mg(2+) contacts are provided by aspartate 678, glutamate 717, asparagine 721, and aspartate 884. Residue serine 886 coordinates ATP. In terms of domain architecture, Glutamine amidotransferase type-1 spans methionine 1042–glycine 1295. The active-site Nucleophile is the cysteine 1135. Active-site residues include histidine 1260 and glutamate 1262.

It in the N-terminal section; belongs to the FGAMS family. In terms of assembly, monomer.

The protein resides in the cytoplasm. The enzyme catalyses N(2)-formyl-N(1)-(5-phospho-beta-D-ribosyl)glycinamide + L-glutamine + ATP + H2O = 2-formamido-N(1)-(5-O-phospho-beta-D-ribosyl)acetamidine + L-glutamate + ADP + phosphate + H(+). It functions in the pathway purine metabolism; IMP biosynthesis via de novo pathway; 5-amino-1-(5-phospho-D-ribosyl)imidazole from N(2)-formyl-N(1)-(5-phospho-D-ribosyl)glycinamide: step 1/2. Phosphoribosylformylglycinamidine synthase involved in the purines biosynthetic pathway. Catalyzes the ATP-dependent conversion of formylglycinamide ribonucleotide (FGAR) and glutamine to yield formylglycinamidine ribonucleotide (FGAM) and glutamate. The protein is Phosphoribosylformylglycinamidine synthase of Pseudoalteromonas atlantica (strain T6c / ATCC BAA-1087).